A 358-amino-acid polypeptide reads, in one-letter code: Aminomethyltransferase (358 aa).

Belongs to the GcvT family. As to quaternary structure, the glycine cleavage system is composed of four proteins: P, T, L and H.

The catalysed reaction is N(6)-[(R)-S(8)-aminomethyldihydrolipoyl]-L-lysyl-[protein] + (6S)-5,6,7,8-tetrahydrofolate = N(6)-[(R)-dihydrolipoyl]-L-lysyl-[protein] + (6R)-5,10-methylene-5,6,7,8-tetrahydrofolate + NH4(+). In terms of biological role, the glycine cleavage system catalyzes the degradation of glycine. The protein is Aminomethyltransferase of Francisella philomiragia subsp. philomiragia (strain ATCC 25017 / CCUG 19701 / FSC 153 / O#319-036).